We begin with the raw amino-acid sequence, 945 residues long: Netrin receptor UNC5B (945 aa).

A signal peptide spans 1 to 26 (MGARSGARGALLLALLLCWDPRLSQA). Residues 27 to 377 (GTDSGSEVLP…LEASGDAALY (351 aa)) are Extracellular-facing. Residues 48–145 (PYFLQEPQDA…AGTTKSRRAY (98 aa)) form the Ig-like domain. 9 disulfides stabilise this stretch: C69–C130, C81–C128, C174–C225, C258–C295, C262–C299, C273–C285, C314–C348, C318–C353, and C326–C338. In terms of domain architecture, Ig-like C2-type spans 147–242 (RIAYLRKNFD…KRRSTTATVI (96 aa)). N-linked (GlcNAc...) asparagine glycosylation is present at N222. TSP type-1 domains lie at 246-300 (NGGW…TICP) and 302-354 (DGAW…GLCM). Residue N347 is glycosylated (N-linked (GlcNAc...) asparagine). The chain crosses the membrane as a helical span at residues 378–398 (AGLVVAIFVVVAILMAVGVVV). Residues 399-945 (YRRNCRDFDT…LVAVATDGDC (547 aa)) are Cytoplasmic-facing. A lipid anchor (S-palmitoyl cysteine) is attached at C403. Residues 543-686 (SSVSGTFGCL…LGTYVFTGES (144 aa)) enclose the ZU5 domain. Phosphotyrosine is present on Y581. The UPA domain stretch occupies residues 689–838 (RSAVKRLQLA…AETPAGSLDT (150 aa)). An interaction with DCC region spans residues 707–725 (SLEYSLRVYCLEDTPVALK). The Death domain occupies 865-943 (KICNSLDAPN…EMLVAVATDG (79 aa)).

The protein belongs to the unc-5 family. In terms of assembly, interacts with the cytoplasmic part of DCC. Interacts with GNAI2 via its cytoplasmic part. Interacts (via death domain) with DAPK1 (via death domain). Interacts (via extracellular domain) with FLRT3 (via extracellular domain); the interaction is direct. Interacts (via extracellular domain) with FLRT2 and FLRT3 (via extracellular domain), but has higher affinity for FLRT3. Identified in a complex with FLRT3 and ADGRL3; does not interact with ADGRL3 by itself. Phosphorylated on cytoplasmic tyrosine residues. In terms of processing, proteolytically cleaved by caspases during apoptosis. The cleavage does not take place when the receptor is associated with netrin ligand. Its cleavage by caspases is required to induce apoptosis. Post-translationally, palmitoylation is required for pro-apoptotic activity, but not for location at lipid rafts. Highly expressed in brain. Also expressed at lower level in developing lung, cartilage, kidney and hematopoietic and immune tissues.

Its subcellular location is the cell membrane. It is found in the membrane raft. Functionally, receptor for netrin required for axon guidance. Mediates axon repulsion of neuronal growth cones in the developing nervous system upon ligand binding. Axon repulsion in growth cones may be caused by its association with DCC that may trigger signaling for repulsion. Functions as a netrin receptor that negatively regulates vascular branching during angiogenesis. Mediates retraction of tip cell filopodia on endothelial growth cones in response to netrin. It also acts as a dependence receptor required for apoptosis induction when not associated with netrin ligand. Mediates apoptosis by activating DAPK1. In the absence of NTN1, activates DAPK1 by reducing its autoinhibitory phosphorylation at Ser-308 thereby increasing its catalytic activity. The protein is Netrin receptor UNC5B (UNC5B) of Homo sapiens (Human).